The chain runs to 105 residues: MKVSVLITLAVLGVMFLLTSAEERGSDQMDSPAWLKSMEIIFQSEERECRWLFGGCEKDSDCCEHLGCRRAKPSWCGWDFTVGKWEMLINMNIFRIVFSYSMCTV.

The first 21 residues, 1-21 (MKVSVLITLAVLGVMFLLTSA), serve as a signal peptide directing secretion. Residues 22 to 48 (EERGSDQMDSPAWLKSMEIIFQSEERE) constitute a propeptide that is removed on maturation. 3 disulfides stabilise this stretch: Cys-49/Cys-63, Cys-56/Cys-68, and Cys-62/Cys-76. Val-82 bears the Valine amide mark. The propeptide occupies 83 to 105 (GKWEMLINMNIFRIVFSYSMCTV).

Belongs to the neurotoxin 10 (Hwtx-1) family. 05 (F4a) subfamily. Expressed by the venom gland.

The protein localises to the secreted. Probable ion channel inhibitor. This chain is U21-theraphotoxin-Cg1a 4, found in Chilobrachys guangxiensis (Chinese earth tiger tarantula).